We begin with the raw amino-acid sequence, 329 residues long: Aspartate carbamoyltransferase catalytic subunit (329 aa).

2 residues coordinate carbamoyl phosphate: Arg-63 and Thr-64. L-aspartate is bound at residue Lys-91. Carbamoyl phosphate-binding residues include Arg-113, His-141, and Gln-144. The L-aspartate site is built by Arg-179 and Arg-234. Residues Gly-275 and Pro-276 each contribute to the carbamoyl phosphate site.

This sequence belongs to the aspartate/ornithine carbamoyltransferase superfamily. ATCase family. Heterododecamer (2C3:3R2) of six catalytic PyrB chains organized as two trimers (C3), and six regulatory PyrI chains organized as three dimers (R2).

It carries out the reaction carbamoyl phosphate + L-aspartate = N-carbamoyl-L-aspartate + phosphate + H(+). It participates in pyrimidine metabolism; UMP biosynthesis via de novo pathway; (S)-dihydroorotate from bicarbonate: step 2/3. Catalyzes the condensation of carbamoyl phosphate and aspartate to form carbamoyl aspartate and inorganic phosphate, the committed step in the de novo pyrimidine nucleotide biosynthesis pathway. The protein is Aspartate carbamoyltransferase catalytic subunit of Magnetococcus marinus (strain ATCC BAA-1437 / JCM 17883 / MC-1).